A 147-amino-acid chain; its full sequence is Gastrin-releasing peptide (147 aa).

Positions Met-1–Ala-23 are cleaved as a signal peptide. Met-52 is subject to Methionine amide. A propeptide spanning residues Ser-56–Ser-147 is cleaved from the precursor. Residues Ala-95–Phe-123 are disordered. Positions Arg-98 to Pro-113 are enriched in polar residues.

It belongs to the bombesin/neuromedin-B/ranatensin family. As to expression, expressed in several dozen cells in the dorsal retrotrapezoid nucleus/parafacial respiratory group (at protein level).

It localises to the secreted. The protein localises to the cytoplasmic vesicle. It is found in the secretory vesicle lumen. Its subcellular location is the cell projection. The protein resides in the neuron projection. Stimulates the release of gastrin and other gastrointestinal hormones. Contributes to the perception of prurient stimuli and to the transmission of itch signals in the spinal cord that promote scratching behavior. Contributes primarily to nonhistaminergic itch sensation. In one study, shown to act in the amygdala as part of an inhibitory network which inhibits memory specifically related to learned fear. In another study, shown to act on vasoactive intestinal peptide (VIP)-expressing cells in the auditory cortex, most likely via extrasynaptic diffusion from local and long-range sources, to mediate disinhibition of glutamatergic cells via VIP cell-specific GRPR signaling which leads to enhanced auditory fear memories. Contributes to the regulation of food intake. Inhibits voltage-gated sodium channels but enhances voltage-gated potassium channels in hippocampal neurons. Induces sighing by acting directly on the pre-Botzinger complex, a cluster of several thousand neurons in the ventrolateral medulla responsible for inspiration during respiratory activity. Functionally, induces an itch response through activation of receptors present on mast cells, triggering mast cell degranulation. The protein is Gastrin-releasing peptide (Grp) of Rattus norvegicus (Rat).